A 109-amino-acid chain; its full sequence is UPF0122 protein CLL_A1244 (109 aa).

Belongs to the UPF0122 family.

Might take part in the signal recognition particle (SRP) pathway. This is inferred from the conservation of its genetic proximity to ftsY/ffh. May be a regulatory protein. The chain is UPF0122 protein CLL_A1244 from Clostridium botulinum (strain Eklund 17B / Type B).